Reading from the N-terminus, the 591-residue chain is MVTEAFEFVAVPFNSDGWGPPDASDVSSSASPTSVAAANLLPNVPFASFSRSDKLGRVADWTRNLSNPSARPNTGSKSDPSAVFDFSAFAIDEGFGLASSGGNPDEDAAFRLVDGKPPPRPKFGPKWRFNPHHNRNQLPQRRDEEVEAKKRDAEKERARRDRLYNNNRNNIHHQRREAAAFKSSVDIQPEWNMLEQIPFSTFSKLSYTVQEPEDLLLCGGLEYYNRLFDRITPKNERRLERFKNRNFFKVTTSDDPVIRRLAKEDKATVFATDAILAALMCAPRSVYSWDIVIQRVGNKLFFDKRDGSQLDLLSVHETSQEPLPESKDDINSAHSLGVEAAYINQNFSQQVLVRDGKKETFDEANPFANEGEEIASVAYRYRRWKLDDNMHLVARCELQSVADLNNQRSFLTLNALNEFDPKYSGVDWRQKLETQRGAVLATELKNNGNKLAKWTAQALLANADMMKIGFVSRVHPRDHFNHVILSVLGYKPKDFAGQINLNTSNMWGIVKSIVDLCMKLSEGKYVLVKDPSKPQVRIYEVPPDAFENDYVEEPLPEDEQVQPTEENTEGAEASVAATKETEEKKADDAQA.

Positions 100-159 are disordered; sequence SGGNPDEDAAFRLVDGKPPPRPKFGPKWRFNPHHNRNQLPQRRDEEVEAKKRDAEKERAR. A compositionally biased stretch (basic residues) spans 123-135; sequence FGPKWRFNPHHNR. The segment covering 140–159 has biased composition (basic and acidic residues); the sequence is QRRDEEVEAKKRDAEKERAR. The tract at residues 309–323 is RNA gate; that stretch reads QLDLLSVHETSQEPL. Over residues 549 to 560 the composition is skewed to acidic residues; it reads DYVEEPLPEDEQ. The disordered stretch occupies residues 549–591; the sequence is DYVEEPLPEDEQVQPTEENTEGAEASVAATKETEEKKADDAQA. The span at 579-591 shows a compositional bias: basic and acidic residues; it reads KETEEKKADDAQA.

Belongs to the eIF-3 subunit D family. Component of the eukaryotic translation initiation factor 3 (eIF-3) complex, which is composed of at least 13 different subunits.

The protein resides in the cytoplasm. Its function is as follows. mRNA cap-binding component of the eukaryotic translation initiation factor 3 (eIF-3) complex, which is involved in protein synthesis of a specialized repertoire of mRNAs and, together with other initiation factors, stimulates binding of mRNA and methionyl-tRNAi to the 40S ribosome. The eIF-3 complex specifically targets and initiates translation of a subset of mRNAs involved in cell proliferation. In the eIF-3 complex, eif3d specifically recognizes and binds the 7-methylguanosine cap of a subset of mRNAs. In Arabidopsis thaliana (Mouse-ear cress), this protein is Eukaryotic translation initiation factor 3 subunit D (TIF3D1).